Here is a 279-residue protein sequence, read N- to C-terminus: Acyl-coenzyme A thioesterase MBLAC2 (279 aa).

Residue Ser2 is modified to N-acetylserine. The Zn(2+) site is built by His83, His85, Asp87, His88, His170, Asp189, and His231. A lipid anchor (S-palmitoyl cysteine) is attached at Cys254.

The protein belongs to the metallo-beta-lactamase superfamily. Glyoxalase II family. Zn(2+) is required as a cofactor. Post-translationally, palmitoylated on Cys-254 by ZDHHC20.

The protein resides in the endoplasmic reticulum membrane. It localises to the cell membrane. The enzyme catalyses hexadecanoyl-CoA + H2O = hexadecanoate + CoA + H(+). The catalysed reaction is dodecanoyl-CoA + H2O = dodecanoate + CoA + H(+). It carries out the reaction tetradecanoyl-CoA + H2O = tetradecanoate + CoA + H(+). It catalyses the reaction octadecanoyl-CoA + H2O = octadecanoate + CoA + H(+). The enzyme catalyses a beta-lactam + H2O = a substituted beta-amino acid. Acyl-CoA thioesterases are a group of enzymes that catalyze the hydrolysis of acyl-CoAs to the free fatty acid and coenzyme A (CoASH), providing the potential to regulate intracellular levels of acyl-CoAs, free fatty acids and CoASH. Has an acyl-CoA thioesterase activity towards the long chain fatty acyl-CoA thioester palmitoyl-CoA (hexadecanoyl-CoA; C16:0-CoA). Displays a substrate preference for fatty acyl-CoAs with chain-lengths C12-C18. The chain is Acyl-coenzyme A thioesterase MBLAC2 (MBLAC2) from Bos taurus (Bovine).